Reading from the N-terminus, the 515-residue chain is MNTRNMFDILRKGIFKDEITQIEKILLKMEDNTYEYVDVFLEKYESQQKLLLKLTKAITEYLSNLKPQLSKQENIYVKHIKSSNEAKTELEIFNCYKEISISKEKKINSLLKLVRESAQDYTINEENDILYHSEISAKKNASPMEFGDASFDLEKQRLHFANSNLHSIESERNESSLSLDSGESEKKSEEDNGNGEQNYIPEQYERLDSPVKEKIINTCCKGKAEPPNYERIKPKAKKGNQMQKIKISKLGTAETQTEDVMNKSSQKENNDILRKHKTSVKFPTNLDALNSCTMENHEINELTATNKMNDGPITKCARETINIKNLKTSNLERNQNSPKNKRTVSYERLANSFSFNALNDYNLKKGGEKLRKKAIKRALKDRGSQDKAYGGVVQSNSRQPKVGFHVNNSSSGHNDNEGNHSLILSSKTKSPQLFNNEKKDESYSGFSNTNSYAIEETSRALMGTSKTRKPENKSKYLIKNGWFEDSLNSEIWSDANPLDWRKTDILEESTSIVYK.

Residues 165–204 (LHSIESERNESSLSLDSGESEKKSEEDNGNGEQNYIPEQY) are disordered.

Its function is as follows. Has a role in meiosis. The protein is Meiotically up-regulated gene 68 protein (mug68) of Schizosaccharomyces pombe (strain 972 / ATCC 24843) (Fission yeast).